Consider the following 612-residue polypeptide: Proline-rich protein 14 (612 aa).

Met-1 is subject to N-acetylmethionine. Polar residues-rich tracts occupy residues 1–15 and 86–96; these read MDLP…QPSL and VCTQSPALPSQ. Disordered stretches follow at residues 1–48, 65–96, 119–150, and 206–256; these read MDLP…EKAS, VPLT…LPSQ, RARQ…QVPQ, and PTLT…PALE. Residues 1–135 are sufficient for heterochromatin association in interphase and chromatin association in anaphase; the sequence is MDLPGNSSPF…ALRMRSRAAS (135 aa). The segment at 85-405 is required for the interaction with GRB2 and sufficient to promote the phosphorylation of AKT and cell proliferation; that stretch reads PVCTQSPALP…MARTPPPPRP (321 aa). The interval 136–392 is required for nuclear lamina association; it reads GPEESPSKKT…QSRPRRHTVG (257 aa). Pro residues predominate over residues 243–252; that stretch reads ADPPESPVPD. Phosphoserine is present on Ser-307. Disordered regions lie at residues 323–405, 444–463, and 553–583; these read QSRA…PPRP, LGST…FSDP, and DSSL…PSQD. A compositionally biased stretch (polar residues) spans 342–359; that stretch reads WRTQCNSLAPVSKSSLGR. Pro residues predominate over residues 366 to 379; it reads LGPPDPGSWPPVPS. Positions 448 to 463 are enriched in basic and acidic residues; sequence KGKELRASKDKVFSDP. Positions 546–563 are required for nuclear localization; it reads RRAVEFRDSSLPRSRRPS. Over residues 570–583 the composition is skewed to polar residues; the sequence is ASRTLTPNLAPSQD.

As to quaternary structure, interacts (via proline-rich region) with GRB2 (via SH3 domain 2). Interacts (via N-terminus) with CBX5.

It is found in the chromosome. It localises to the nucleus. Its subcellular location is the nucleus lamina. The protein resides in the nucleoplasm. Its function is as follows. Functions in tethering peripheral heterochromatin to the nuclear lamina during interphase, possibly through the interaction with heterochromatin protein CBX5/HP1 alpha. Might play a role in reattaching heterochromatin to the nuclear lamina at mitotic exit. Promotes myoblast differentiation during skeletal myogenesis, possibly by stimulating transcription factor MyoD activity via binding to CBX5/HP1 alpha. Involved in the positive regulation of the PI3K-Akt-mTOR signaling pathway and in promoting cell proliferation, possibly via binding to GRB2. This is Proline-rich protein 14 (Prr14) from Mus musculus (Mouse).